The primary structure comprises 142 residues: Metallothiol transferase FosB (142 aa).

Residues 5 to 120 (SVNHICFSVS…DGHKIELHTG (116 aa)) form the VOC domain. Positions 8, 67, and 116 each coordinate Mg(2+). The Proton donor/acceptor role is filled by E116.

This sequence belongs to the fosfomycin resistance protein family. FosB subfamily. In terms of assembly, homodimer. Requires Mg(2+) as cofactor.

The protein localises to the cytoplasm. Functionally, metallothiol transferase which confers resistance to fosfomycin by catalyzing the addition of a thiol cofactor to fosfomycin. L-cysteine is probably the physiological thiol donor. The protein is Metallothiol transferase FosB of Staphylococcus epidermidis (strain ATCC 12228 / FDA PCI 1200).